Reading from the N-terminus, the 185-residue chain is Heavy metal-associated isoprenylated plant protein 11 (185 aa).

Residues 39–106 enclose the HMA domain; that stretch reads QQNTNVVFKL…ICKHVAIIAA (68 aa). The span at 109-158 shows a compositional bias: basic and acidic residues; that stretch reads IREPEQNRNPVTRREPNREPEQNRSRVTRREPSREPEPNRAPLARRESRP. Residues 109–185 are disordered; it reads IREPEQNRNP…GENSDGCIIM (77 aa). Cys-182 carries the cysteine methyl ester modification. Cys-182 carries S-farnesyl cysteine lipidation. Residues 183–185 constitute a propeptide, removed in mature form; that stretch reads IIM.

It belongs to the HIPP family.

In terms of biological role, probable heavy-metal-binding protein. The polypeptide is Heavy metal-associated isoprenylated plant protein 11 (Arabidopsis thaliana (Mouse-ear cress)).